Here is a 97-residue protein sequence, read N- to C-terminus: Small ribosomal subunit protein bS20 (97 aa).

It belongs to the bacterial ribosomal protein bS20 family.

Binds directly to 16S ribosomal RNA. In Prochlorococcus marinus subsp. pastoris (strain CCMP1986 / NIES-2087 / MED4), this protein is Small ribosomal subunit protein bS20.